The sequence spans 176 residues: NAD(P)H-quinone oxidoreductase subunit 6, chloroplastic (176 aa).

A run of 5 helical transmembrane segments spans residues 10–30 (FILVFLGSGLILGSLGVVFFT), 32–52 (TIFSAFSLGLVLVCVSLFYIL), 63–83 (LLIYVGAINVLIIFAVMFMNG), 92–112 (VWTVGDGITLMVCTSIFISQI), and 152–172 (FFLPFELISIILLVALIGAIF).

The protein belongs to the complex I subunit 6 family. NDH is composed of at least 16 different subunits, 5 of which are encoded in the nucleus.

The protein resides in the plastid. The protein localises to the chloroplast thylakoid membrane. It carries out the reaction a plastoquinone + NADH + (n+1) H(+)(in) = a plastoquinol + NAD(+) + n H(+)(out). The catalysed reaction is a plastoquinone + NADPH + (n+1) H(+)(in) = a plastoquinol + NADP(+) + n H(+)(out). NDH shuttles electrons from NAD(P)H:plastoquinone, via FMN and iron-sulfur (Fe-S) centers, to quinones in the photosynthetic chain and possibly in a chloroplast respiratory chain. The immediate electron acceptor for the enzyme in this species is believed to be plastoquinone. Couples the redox reaction to proton translocation, and thus conserves the redox energy in a proton gradient. In Phaseolus vulgaris (Kidney bean), this protein is NAD(P)H-quinone oxidoreductase subunit 6, chloroplastic (ndhG).